Here is a 260-residue protein sequence, read N- to C-terminus: Indole-3-glycerol phosphate synthase (260 aa).

It belongs to the TrpC family.

The enzyme catalyses 1-(2-carboxyphenylamino)-1-deoxy-D-ribulose 5-phosphate + H(+) = (1S,2R)-1-C-(indol-3-yl)glycerol 3-phosphate + CO2 + H2O. It participates in amino-acid biosynthesis; L-tryptophan biosynthesis; L-tryptophan from chorismate: step 4/5. This Thermoanaerobacter pseudethanolicus (strain ATCC 33223 / 39E) (Clostridium thermohydrosulfuricum) protein is Indole-3-glycerol phosphate synthase.